The chain runs to 130 residues: uncharacterized protein (130 aa).

This is an uncharacterized protein from Treponema pallidum (strain Nichols).